The sequence spans 149 residues: Protegrin-1 (149 aa).

A signal peptide spans 1-29; the sequence is METQRASLCLGRWSLWLLLLALVVPSASA. Residues 30–130 constitute a propeptide that is removed on maturation; that stretch reads QALSYREAVL…DITCNEVQGV (101 aa). Residues 61–80 are disordered; the sequence is DQPPKADEDPGTPKPVSFTV. 4 disulfide bridges follow: Cys85-Cys96, Cys107-Cys124, Cys136-Cys145, and Cys138-Cys143. Arg148 carries the post-translational modification Arginine amide.

Belongs to the cathelicidin family.

The protein resides in the secreted. Microbicidal activity. Active against E.coli, Listeria monocytogenes and C.albicans, in vitro. The protein is Protegrin-1 (NPG1) of Sus scrofa (Pig).